A 254-amino-acid chain; its full sequence is 3-deoxy-manno-octulosonate cytidylyltransferase (254 aa).

Belongs to the KdsB family.

It localises to the cytoplasm. The enzyme catalyses 3-deoxy-alpha-D-manno-oct-2-ulosonate + CTP = CMP-3-deoxy-beta-D-manno-octulosonate + diphosphate. The protein operates within nucleotide-sugar biosynthesis; CMP-3-deoxy-D-manno-octulosonate biosynthesis; CMP-3-deoxy-D-manno-octulosonate from 3-deoxy-D-manno-octulosonate and CTP: step 1/1. It participates in bacterial outer membrane biogenesis; lipopolysaccharide biosynthesis. Functionally, activates KDO (a required 8-carbon sugar) for incorporation into bacterial lipopolysaccharide in Gram-negative bacteria. The polypeptide is 3-deoxy-manno-octulosonate cytidylyltransferase (Pseudomonas syringae pv. tomato (strain ATCC BAA-871 / DC3000)).